The chain runs to 296 residues: 5'-3' exonuclease (296 aa).

In terms of domain architecture, 5'-3' exonuclease spans 175–262 (VMPKALIDIK…VPLACTLKDA (88 aa)).

Functionally, 5'-3' exonuclease acting preferentially on double-stranded DNA. The polypeptide is 5'-3' exonuclease (ypcP) (Bacillus subtilis (strain 168)).